We begin with the raw amino-acid sequence, 420 residues long: Phospholipase A1-II 3 (420 aa).

The signal sequence occupies residues 1-21 (MCCFLLVSVLLATTLTDVASA). Asn-231 carries N-linked (GlcNAc...) asparagine glycosylation. Ser-240 acts as the Acyl-ester intermediate in catalysis. Ser-240 serves as the catalytic Charge relay system. N-linked (GlcNAc...) asparagine glycosylation is present at Asn-294. Residues Asp-305 and His-343 each act as charge relay system in the active site. Residues 367-388 (VVDRDLALVNKEVDALRDEYQV) adopt a coiled-coil conformation. Asn-403 carries an N-linked (GlcNAc...) asparagine glycan.

Belongs to the AB hydrolase superfamily. Lipase family.

The protein resides in the secreted. Its function is as follows. Acylhydrolase that catalyzes the hydrolysis of phospholipids at the sn-1 position. This Oryza sativa subsp. japonica (Rice) protein is Phospholipase A1-II 3.